A 386-amino-acid chain; its full sequence is MAGDSVKSAIIGIAGGPFSGKTQLCEQLLERLKSSAPSTFSKLIHLTSFLYPNSVDRYALSSYDIEAFKKVLSLISQGAEKICLPDGSCIKLPVDQNRIILIEGYYLLLPELLPYYTSKIFVYEDADTRLERCVLQRVKAEKGDLTKVLNDFVTLSKPAYDSSIHPTRENADIILPQKENIDTALLFVSQHLQDILAEMNKTSSSNTVKYDTQHETYMKLAHEMARTSLSNREVPVSCVFVYKGEVIGRGFNETNCSLSGIRHAELIAIEKILEHYPASVFKETTLYVTVEPCLMCAAALKQLHIKAVYFGCGNDRFGGCGSVFSINKDQSIDPSYPVYPGLFYSEAVMLMREFYVQENVKAPVPQSKKQRVLKREVKSLDLSRFK.

One can recognise a CMP/dCMP-type deaminase domain in the interval 212–322 (TQHETYMKLA…GNDRFGGCGS (111 aa)). H263 serves as a coordination point for Zn(2+). Catalysis depends on E265, which acts as the Proton donor. The Zn(2+) site is built by C293 and C296.

This sequence belongs to the cytidine and deoxycytidylate deaminase family. ADAT2 subfamily. Heterodimer with Tad3. The cofactor is Zn(2+).

It carries out the reaction adenosine(34) in tRNA + H2O + H(+) = inosine(34) in tRNA + NH4(+). Its function is as follows. Structural subunit of tRNA-specific adenosine deaminase, which deaminates adenosine-34 (the first, also called wobble position of the anticodon) to inosine in many tRNAs. Inosine-34 allows the decoding of 3 different nucleotides at the third position of mRNA codons, as inosine is able to pair with U, C, and A. The wobble inosine tRNA modification is essential for cell cycle progression in the G1/S and G2/M transitions in fission yeast. This is tRNA-specific adenosine deaminase subunit tad2 (tad2) from Schizosaccharomyces pombe (strain 972 / ATCC 24843) (Fission yeast).